The chain runs to 336 residues: D-alanine--D-alanine ligase (336 aa).

Residues 124 to 330 (KMWFSALGIP…FATFLEQAIL (207 aa)) form the ATP-grasp domain. An ATP-binding site is contributed by 154-209 (AFDEWGSVFIKAASQGSSVGCFPAHRREDIPGLVRKAFEYAPFVVVEKTIKARELE). 3 residues coordinate Mg(2+): D284, E297, and N299.

Belongs to the D-alanine--D-alanine ligase family. Requires Mg(2+) as cofactor. Mn(2+) serves as cofactor.

Its subcellular location is the cytoplasm. It catalyses the reaction 2 D-alanine + ATP = D-alanyl-D-alanine + ADP + phosphate + H(+). Its pathway is cell wall biogenesis; peptidoglycan biosynthesis. In terms of biological role, cell wall formation. This is D-alanine--D-alanine ligase from Shewanella amazonensis (strain ATCC BAA-1098 / SB2B).